The primary structure comprises 146 residues: Endothelial differentiation-related factor 1 homolog (146 aa).

The disordered stretch occupies residues Arg13–Val53. Over residues Ser17–Gln31 the composition is skewed to low complexity. The span at Arg32 to Lys41 shows a compositional bias: basic and acidic residues. The HTH cro/C1-type domain maps to Ile80–Lys134. The segment at residues Gln91–Cys110 is a DNA-binding region (H-T-H motif).

It localises to the nucleus. Functionally, probable transcriptional coactivator. The protein is Endothelial differentiation-related factor 1 homolog (edf1) of Danio rerio (Zebrafish).